The following is a 288-amino-acid chain: Bifunctional protein FolD (288 aa).

Residues 166–168, S191, and V232 contribute to the NADP(+) site; that span reads GRS.

It belongs to the tetrahydrofolate dehydrogenase/cyclohydrolase family. In terms of assembly, homodimer.

It carries out the reaction (6R)-5,10-methylene-5,6,7,8-tetrahydrofolate + NADP(+) = (6R)-5,10-methenyltetrahydrofolate + NADPH. It catalyses the reaction (6R)-5,10-methenyltetrahydrofolate + H2O = (6R)-10-formyltetrahydrofolate + H(+). It participates in one-carbon metabolism; tetrahydrofolate interconversion. Catalyzes the oxidation of 5,10-methylenetetrahydrofolate to 5,10-methenyltetrahydrofolate and then the hydrolysis of 5,10-methenyltetrahydrofolate to 10-formyltetrahydrofolate. This Roseiflexus castenholzii (strain DSM 13941 / HLO8) protein is Bifunctional protein FolD.